The primary structure comprises 200 residues: MAQQRALPQSKETLLQSYNKRLKDDIKSIMDNFTEIIKTAKIEDETQVSRATQGEQDNYEMHVRAANIVRAGESLMKLVSDLKQFLILNDFPSVNEAIDQRNQQLRALQEECDRKLITLRDEVSIDLYELEEEYYSSSSSLCEANDLPLCEAYWRLDLDADSADGLSAPLLASPETGAGPLQSAAPVHSHGGGPGPTEHT.

Positions 93-122 form a coiled coil; it reads SVNEAIDQRNQQLRALQEECDRKLITLRDE. The interval 169 to 200 is disordered; the sequence is PLLASPETGAGPLQSAAPVHSHGGGPGPTEHT. The segment covering 190 to 200 has biased composition (gly residues); that stretch reads HGGGPGPTEHT.

It belongs to the Mediator complex subunit 22 family. Component of the Mediator complex, which is composed of MED1, MED4, MED6, MED7, MED8, MED9, MED10, MED11, MED12, MED13, MED13L, MED14, MED15, MED16, MED17, MED18, MED19, MED20, MED21, MED22, MED23, MED24, MED25, MED26, MED27, MED29, MED30, MED31, CCNC, CDK8 and CDC2L6/CDK11. The MED12, MED13, CCNC and CDK8 subunits form a distinct module termed the CDK8 module. Mediator containing the CDK8 module is less active than Mediator lacking this module in supporting transcriptional activation. Individual preparations of the Mediator complex lacking one or more distinct subunits have been variously termed ARC, CRSP, DRIP, PC2, SMCC and TRAP.

It is found in the nucleus. In terms of biological role, component of the Mediator complex, a coactivator involved in the regulated transcription of nearly all RNA polymerase II-dependent genes. Mediator functions as a bridge to convey information from gene-specific regulatory proteins to the basal RNA polymerase II transcription machinery. Mediator is recruited to promoters by direct interactions with regulatory proteins and serves as a scaffold for the assembly of a functional preinitiation complex with RNA polymerase II and the general transcription factors. The polypeptide is Mediator of RNA polymerase II transcription subunit 22 (Med22) (Mus musculus (Mouse)).